The primary structure comprises 154 residues: RING finger protein 11 (154 aa).

Positions 1-12 are enriched in polar residues; the sequence is MGNCLKSPTSDD. Positions 1 to 52 are disordered; sequence MGNCLKSPTSDDISLLHESQSDRASFGEGTEPDQEPPPPYQEQVPVPIYHPT. A lipid anchor (N-myristoyl glycine) is attached at G2. C4 is lipidated: S-palmitoyl cysteine. A phosphoserine mark is found at S14 and S25. A PPxY motif motif is present at residues 37-40; it reads PPPY. The segment at 99–140 adopts an RING-type zinc-finger fold; it reads CVICMMDFVYGDPIRFLPCMHIYHLDCIDDWLMRSFTCPSCM. The residue at position 135 (T135) is a Phosphothreonine; by PKB/AKT1.

As to quaternary structure, interacts (when phosphorylated) with 14-3-3. Interacts with the E3 ubiquitin-ligases NEDD4, ITCH, SMURF2 and WWP1. Also interacts with the E2 ubiquitin-conjugating enzymes UBE2D1 and UBE2N, but neither with CDC34, nor with UBE2L3. Interacts with ZNF350, EPS15 and STAMBP. After TNF stimulation, interacts with TAX1BP1, TNFAIP3 and RIPK1; these interactions are transient and they are lost after 1 hour of stimulation with TNF. Interacts with GGA1. In terms of processing, ubiquitinated in the presence of ITCH, SMURF2 and UBE2D1, as well as WWP1. Post-translationally, phosphorylation by PKB/AKT1 may accelerate degradation by the proteasome. Acylation at both Gly-2 and Cys-4 is required for proper localization to the endosomes.

It is found in the early endosome. The protein localises to the recycling endosome. It localises to the cytoplasm. Its subcellular location is the nucleus. In terms of biological role, essential component of a ubiquitin-editing protein complex, comprising also TNFAIP3, ITCH and TAX1BP1, that ensures the transient nature of inflammatory signaling pathways. Promotes the association of TNFAIP3 to RIPK1 after TNF stimulation. TNFAIP3 deubiquitinates 'Lys-63' polyubiquitin chains on RIPK1 and catalyzes the formation of 'Lys-48'-polyubiquitin chains. This leads to RIPK1 proteasomal degradation and consequently termination of the TNF- or LPS-mediated activation of NF-kappa-B. Recruits STAMBP to the E3 ubiquitin-ligase SMURF2 for ubiquitination, leading to its degradation by the 26S proteasome. The sequence is that of RING finger protein 11 (Rnf11) from Mus musculus (Mouse).